A 457-amino-acid chain; its full sequence is Bifunctional protein GlmU (457 aa).

Residues 1 to 229 (MYNCAIILAA…YEEIMGVNSR (229 aa)) form a pyrophosphorylase region. UDP-N-acetyl-alpha-D-glucosamine contacts are provided by residues 8 to 11 (LAAG), Lys22, Gln73, and 78 to 79 (GT). A Mg(2+)-binding site is contributed by Asp103. UDP-N-acetyl-alpha-D-glucosamine is bound by residues Gly140, Glu155, Asn170, and Asn227. Residue Asn227 participates in Mg(2+) binding. Residues 230–250 (VQLSEAEIVMRKRINHKHMVN) form a linker region. The interval 251 to 457 (GVTFIDCEST…WLDKKGLLKK (207 aa)) is N-acetyltransferase. Residues Arg332 and Lys350 each contribute to the UDP-N-acetyl-alpha-D-glucosamine site. His362 (proton acceptor) is an active-site residue. The UDP-N-acetyl-alpha-D-glucosamine site is built by Tyr365 and Asn376. Acetyl-CoA contacts are provided by residues 385-386 (NY), Ala422, and Arg439.

In the N-terminal section; belongs to the N-acetylglucosamine-1-phosphate uridyltransferase family. This sequence in the C-terminal section; belongs to the transferase hexapeptide repeat family. Homotrimer. The cofactor is Mg(2+).

It is found in the cytoplasm. The enzyme catalyses alpha-D-glucosamine 1-phosphate + acetyl-CoA = N-acetyl-alpha-D-glucosamine 1-phosphate + CoA + H(+). It catalyses the reaction N-acetyl-alpha-D-glucosamine 1-phosphate + UTP + H(+) = UDP-N-acetyl-alpha-D-glucosamine + diphosphate. Its pathway is nucleotide-sugar biosynthesis; UDP-N-acetyl-alpha-D-glucosamine biosynthesis; N-acetyl-alpha-D-glucosamine 1-phosphate from alpha-D-glucosamine 6-phosphate (route II): step 2/2. It functions in the pathway nucleotide-sugar biosynthesis; UDP-N-acetyl-alpha-D-glucosamine biosynthesis; UDP-N-acetyl-alpha-D-glucosamine from N-acetyl-alpha-D-glucosamine 1-phosphate: step 1/1. It participates in bacterial outer membrane biogenesis; LPS lipid A biosynthesis. Catalyzes the last two sequential reactions in the de novo biosynthetic pathway for UDP-N-acetylglucosamine (UDP-GlcNAc). The C-terminal domain catalyzes the transfer of acetyl group from acetyl coenzyme A to glucosamine-1-phosphate (GlcN-1-P) to produce N-acetylglucosamine-1-phosphate (GlcNAc-1-P), which is converted into UDP-GlcNAc by the transfer of uridine 5-monophosphate (from uridine 5-triphosphate), a reaction catalyzed by the N-terminal domain. The protein is Bifunctional protein GlmU of Clostridium botulinum (strain Kyoto / Type A2).